The sequence spans 391 residues: 3-ketoacyl-CoA thiolase (391 aa).

Cys95 acts as the Acyl-thioester intermediate in catalysis. Active-site proton acceptor residues include His347 and Cys377.

This sequence belongs to the thiolase-like superfamily. Thiolase family. In terms of assembly, heterotetramer of two alpha chains (FadB) and two beta chains (FadA).

The protein resides in the cytoplasm. The enzyme catalyses an acyl-CoA + acetyl-CoA = a 3-oxoacyl-CoA + CoA. It functions in the pathway lipid metabolism; fatty acid beta-oxidation. Its function is as follows. Catalyzes the final step of fatty acid oxidation in which acetyl-CoA is released and the CoA ester of a fatty acid two carbons shorter is formed. The chain is 3-ketoacyl-CoA thiolase from Marinobacter nauticus (strain ATCC 700491 / DSM 11845 / VT8) (Marinobacter aquaeolei).